The following is a 429-amino-acid chain: Adenylosuccinate synthetase (429 aa).

Residues 12–18 (GDEGKGK) and 40–42 (GHT) contribute to the GTP site. Residue Asp13 is the Proton acceptor of the active site. Asp13 and Gly40 together coordinate Mg(2+). IMP contacts are provided by residues 13 to 16 (DEGK), 38 to 41 (NAGH), Thr128, Arg142, Gln223, Thr238, and Arg302. His41 acts as the Proton donor in catalysis. 298–304 (TTTGRPR) contributes to the substrate binding site. Residues Arg304, 330 to 332 (SID), and 412 to 414 (SVG) contribute to the GTP site.

It belongs to the adenylosuccinate synthetase family. Homodimer. Requires Mg(2+) as cofactor.

The protein resides in the cytoplasm. It carries out the reaction IMP + L-aspartate + GTP = N(6)-(1,2-dicarboxyethyl)-AMP + GDP + phosphate + 2 H(+). Its pathway is purine metabolism; AMP biosynthesis via de novo pathway; AMP from IMP: step 1/2. Functionally, plays an important role in the de novo pathway of purine nucleotide biosynthesis. Catalyzes the first committed step in the biosynthesis of AMP from IMP. The sequence is that of Adenylosuccinate synthetase from Lysinibacillus sphaericus (strain C3-41).